The chain runs to 350 residues: DNA polymerase IV (350 aa).

One can recognise a UmuC domain in the interval I6–G187. Residues D10 and D105 each coordinate Mg(2+). Residue E106 is part of the active site.

It belongs to the DNA polymerase type-Y family. As to quaternary structure, monomer. Requires Mg(2+) as cofactor.

The protein resides in the cytoplasm. The enzyme catalyses DNA(n) + a 2'-deoxyribonucleoside 5'-triphosphate = DNA(n+1) + diphosphate. Poorly processive, error-prone DNA polymerase involved in untargeted mutagenesis. Copies undamaged DNA at stalled replication forks, which arise in vivo from mismatched or misaligned primer ends. These misaligned primers can be extended by PolIV. Exhibits no 3'-5' exonuclease (proofreading) activity. May be involved in translesional synthesis, in conjunction with the beta clamp from PolIII. The polypeptide is DNA polymerase IV (Protochlamydia amoebophila (strain UWE25)).